The chain runs to 298 residues: Acetyl-coenzyme A carboxylase carboxyl transferase subunit beta (298 aa).

A CoA carboxyltransferase N-terminal domain is found at 41–298; the sequence is PTIECPECHA…RIVSKLMNLP (258 aa). Cys-45, Cys-48, Cys-64, and Cys-67 together coordinate Zn(2+). The segment at 45–67 adopts a C4-type zinc-finger fold; it reads CPECHALVTRTAIAFNAYVCPSC.

Belongs to the AccD/PCCB family. In terms of assembly, acetyl-CoA carboxylase is a heterohexamer composed of biotin carboxyl carrier protein (AccB), biotin carboxylase (AccC) and two subunits each of ACCase subunit alpha (AccA) and ACCase subunit beta (AccD). The cofactor is Zn(2+).

It is found in the cytoplasm. It carries out the reaction N(6)-carboxybiotinyl-L-lysyl-[protein] + acetyl-CoA = N(6)-biotinyl-L-lysyl-[protein] + malonyl-CoA. The protein operates within lipid metabolism; malonyl-CoA biosynthesis; malonyl-CoA from acetyl-CoA: step 1/1. Component of the acetyl coenzyme A carboxylase (ACC) complex. Biotin carboxylase (BC) catalyzes the carboxylation of biotin on its carrier protein (BCCP) and then the CO(2) group is transferred by the transcarboxylase to acetyl-CoA to form malonyl-CoA. This chain is Acetyl-coenzyme A carboxylase carboxyl transferase subunit beta, found in Acinetobacter baylyi (strain ATCC 33305 / BD413 / ADP1).